The sequence spans 883 residues: Glutamate receptor 2 (883 aa).

Positions 1-21 are cleaved as a signal peptide; the sequence is MQKIMHISVLLSPVLWGLIFG. Residues 22 to 543 lie on the Extracellular side of the membrane; it reads VSSNSIQIGG…GVFSFLDPLA (522 aa). A disulfide bond links C78 and C330. N-linked (GlcNAc...) asparagine glycans are attached at residues N256, N370, N406, and N413. L-glutamate-binding residues include P499, T501, and R506. The helical transmembrane segment at 544–564 threads the bilayer; that stretch reads YEIWMCIVFAYIGVSVVLFLV. Residues 565-591 are Cytoplasmic-facing; sequence SRFSPYEWHTEEFEDGRETQSSESTNE. Residues 592-607 constitute an intramembrane region (helical; Pore-forming); it reads FGIFNSLWFSLGAFMQ. Residues 608–610 lie within the membrane without spanning it; that stretch reads QGC. C610 carries the S-palmitoyl cysteine lipid modification. The Cytoplasmic portion of the chain corresponds to 611–616; that stretch reads DISPRS. A helical membrane pass occupies residues 617–637; the sequence is LSGRIVGGVWWFFTLIIISSY. Residues 638 to 812 lie on the Extracellular side of the membrane; sequence TANLAAFLTV…EKTSALSLSN (175 aa). L-glutamate contacts are provided by S675 and T676. A Phosphoserine; by PKC modification is found at S683. S717 is modified (phosphoserine; by PKG). E726 provides a ligand contact to L-glutamate. C739 and C794 are joined by a disulfide. The chain crosses the membrane as a helical span at residues 813-833; sequence VAGVFYILVGGLGLAMLVALI. Residues 834–883 lie on the Cytoplasmic side of the membrane; the sequence is EFCYKSRAEAKRMKVAKNPQNINPSSSQNSQNFATYKEGYNVYGIESVKI. A lipid anchor (S-palmitoyl cysteine) is attached at C836. S860 and S863 each carry phosphoserine. Positions 867–877 are required for interaction with IQSEC1; that stretch reads ATYKEGYNVYG. Y876 is subject to Phosphotyrosine. Residue S880 is modified to Phosphoserine.

This sequence belongs to the glutamate-gated ion channel (TC 1.A.10.1) family. GRIA2 subfamily. As to quaternary structure, homotetramer or heterotetramer of pore-forming glutamate receptor subunits. Tetramers may be formed by the dimerization of dimers. May interact with MPP4. Forms a ternary complex with GRIP1 and CSPG4. Interacts with ATAD1 in an ATP-dependent manner. ATAD1-catalyzed ATP hydrolysis disrupts binding to ATAD1 and to GRIP1 and leads to AMPAR complex disassembly. Interacts with GRIP2. Interacts with GRIP1. Interacts with NSF via its C-terminus. Interacts with CACNG2, PICK1 and GRIP2. Interacts with GRIA1 and SYNDIG1. Part of a complex containing GRIA2, NSF and NAPA and/or NAPB. Interacts with SNX27 (via PDZ domain); the interaction is required for recycling to the plasma membrane when endocytosed and prevent degradation in lysosomes. Interacts with LRFN1. Found in a complex with GRIA1, GRIA3, GRIA4, CNIH2, CNIH3, CACNG2, CACNG3, CACNG4, CACNG5, CACNG7 and CACNG8. Interacts with CACNG5. Interacts with OLFM2. Interacts with AP4B1, AP4E1 and AP4M1; probably indirect it mediates the somatodendritic localization of GRIA2 in neurons. Forms a complex with GRIP1, NSG1 and STX12; controls the intracellular fate of AMPAR and the endosomal sorting of the GRIA2 subunit toward recycling and membrane targeting. Interacts with IQSEC1; the interaction is required for ARF6 activation. Interacts (heterotetramer form) with CNIH2 and CNIH3; this interaction promotes expression at the plasma membrane and extensively modulates their gating properties by slowing deactivation and desensitization kinetics. Palmitoylated. Depalmitoylated upon L-glutamate stimulation. Cys-610 palmitoylation leads to Golgi retention and decreased cell surface expression. In contrast, Cys-836 palmitoylation does not affect cell surface expression but regulates stimulation-dependent endocytosis. In terms of processing, phosphorylation at Tyr-876 is required for interaction with IQSEC1 and ARF6 activation, which in turn triggers AMPAR internalization for persistent synaptic depression. Post-translationally, ubiquitinated by RNF167, leading to its degradation. N-glycosylated. As to expression, detected in forebrain. Detected in dendrites of neuronal cells. Expressed in the pyramidal cell layers of CA1 and CA3 and in the granule cell layer of the dentate gyrus.

Its subcellular location is the cell membrane. The protein localises to the postsynaptic cell membrane. It localises to the postsynaptic density membrane. The enzyme catalyses Ca(2+)(in) = Ca(2+)(out). It carries out the reaction Na(+)(in) = Na(+)(out). Ionotropic glutamate receptor that functions as a ligand-gated cation channel, gated by L-glutamate and glutamatergic agonists such as alpha-amino-3-hydroxy-5-methyl-4-isoxazolepropionic acid (AMPA), quisqualic acid, and kainic acid. L-glutamate acts as an excitatory neurotransmitter at many synapses in the central nervous system and plays an important role in fast excitatory synaptic transmission. Binding of the excitatory neurotransmitter L-glutamate induces a conformation change, leading to the opening of the cation channel, and thereby converts the chemical signal to an electrical impulse upon entry of monovalent and divalent cations such as sodium and calcium. The receptor then desensitizes rapidly and enters in a transient inactive state, characterized by the presence of bound agonist. In the presence of CACNG4 or CACNG7 or CACNG8, shows resensitization which is characterized by a delayed accumulation of current flux upon continued application of L-glutamate. Through complex formation with NSG1, GRIP1 and STX12 controls the intracellular fate of AMPAR and the endosomal sorting of the GRIA2 subunit toward recycling and membrane targeting. The protein is Glutamate receptor 2 of Rattus norvegicus (Rat).